The chain runs to 2844 residues: Sodium channel protein 60E (2844 aa).

Topologically, residues 1–121 (MSDDQATFND…WSPARRVCVY (121 aa)) are cytoplasmic. The stretch at 107 to 434 (FLFYPWSPAR…FDPSVLNVKK (328 aa)) is one I repeat. The helical transmembrane segment at 122–145 (IATNQFFDYCVMATILFNCIFLAM) threads the bilayer. The Extracellular segment spans residues 146–151 (TETVEE). A helical membrane pass occupies residues 152-172 (AEYIFLAIYSIEMVIKIIAKG). Residues 173 to 183 (FLLNKYTYLRN) lie on the Cytoplasmic side of the membrane. Residues 184–202 (PWNWLDFVVITSGYATIGM) traverse the membrane as a helical segment. Residues 203–208 (EVGNLA) are Extracellular-facing. Residues 209–228 (GLRTFRVLRALKTVSIMPGL) form a helical; Voltage-sensor membrane-spanning segment. Over 229–244 (KTIINALLHSFRQLAE) the chain is Cytoplasmic. Residues 245–265 (VMTLTIFCLMVFALFALQVYM) traverse the membrane as a helical segment. Topologically, residues 266-340 (GELRNKCVRQ…PNHGYTNFDN (75 aa)) are extracellular. Cys272 and Cys318 are joined by a disulfide. Asn282, Asn293, and Asn311 each carry an N-linked (GlcNAc...) asparagine glycan. An intramembrane region (pore-forming) is located at residues 341 to 365 (FMWSMLTTFQLITLDYWENVYNMVL). At 366 to 374 (ATCGPMSVS) the chain is on the extracellular side. A helical membrane pass occupies residues 375 to 395 (FFTVVVFFGSFYLINLMLAVV). Residues 396–687 (ALSYEEEAEI…QNCLYKVVRD (292 aa)) lie on the Cytoplasmic side of the membrane. Positions 452–610 (ASYSKKKTRR…QDTTNDMGHV (159 aa)) are disordered. Residues 455–465 (SKKKTRRKKTK) are compositionally biased toward basic residues. Residues 469–479 (EGGTNGNGNGS) show a composition bias toward gly residues. Low complexity-rich tracts occupy residues 511 to 520 (QAQKQYQQME) and 577 to 586 (SSNSSGVNRE). The span at 593–603 (GVVDDHEEQDT) shows a compositional bias: acidic residues. The II repeat unit spans residues 668-1130 (CTDYESWLQF…ESIELLGQYN (463 aa)). The chain crosses the membrane as a helical span at residues 688–708 (PLFELAITLCIVLNTAFLAME). Topologically, residues 709–718 (HHGMSESFRN) are extracellular. A helical membrane pass occupies residues 719–743 (ALDVGNKVFTSIFTFECIVKLMALS). The Cytoplasmic segment spans residues 744–749 (KDFFLC). Residues 750 to 769 (GWNIFDLLIVTASLLDIIFE) traverse the membrane as a helical segment. Residues 770–775 (LVDGLS) are Extracellular-facing. A helical; Voltage-sensor transmembrane segment spans residues 776–795 (VLRGLRLLRVLKLAQSWTTM). Residues 796 to 810 (KVLLSIIISTIGALG) are Cytoplasmic-facing. Residues 811-832 (NLTLILVIVIYIFAVIGMQLFS) form a helical membrane-spanning segment. Residues 833–852 (KDYTPEKFDPDPVPRWNFND) lie on the Extracellular side of the membrane. Positions 853 to 873 (FFHSFMMIFRILCGEWIEPLW) form an intramembrane region, pore-forming. Residues 874–889 (DCMRAEEEQGASTCFA) are Extracellular-facing. Residues Cys875 and Cys887 are joined by a disulfide bond. The chain crosses the membrane as a helical span at residues 890 to 910 (IFLPTLVMGNFMVLNLFLALL). The Cytoplasmic segment spans residues 911 to 1742 (LNSFNSEELK…SAKHWTRVRT (832 aa)). Positions 1129-1157 (YNSTDTDPYANDQRSGCGSFNRGDSLQDN) are enriched in polar residues. 5 disordered regions span residues 1129-1166 (YNST…GSEE), 1185-1224 (YRKS…NSMS), 1268-1288 (ISNV…ENET), 1577-1630 (APTP…ADAS), and 1635-1654 (LAMA…ATQK). Residues 1191–1203 (RLSQSSGQSQRSL) show a composition bias toward low complexity. Positions 1204 to 1213 (LKSEEAEMRR) are enriched in basic and acidic residues. Polar residues-rich tracts occupy residues 1277–1286 (PSSQMGQPEN), 1604–1618 (PQST…QSAR), and 1640–1654 (KTEQ…ATQK). The stretch at 1723–2040 (PWFMSCMDTQ…QKHYYTAMKK (318 aa)) is one III repeat. Residues 1743–1763 (AVLTVVDTPAFEWFVLVLIFA) traverse the membrane as a helical segment. Residues 1764-1789 (SSITLCFEDINLDKNKTLKRVLYWIN) are Extracellular-facing. 2 N-linked (GlcNAc...) asparagine glycosylation sites follow: Asn1778 and Asn1789. The helical transmembrane segment at 1790–1810 (FSFCLIFVVEMILKWLALGFS) threads the bilayer. Residues 1811-1813 (KYF) lie on the Cytoplasmic side of the membrane. A helical transmembrane segment spans residues 1814–1834 (TSFWTILDFIIVFVSVFSLLI). Residues 1835–1839 (EENEN) are Extracellular-facing. The chain crosses the membrane as a helical; Voltage-sensor span at residues 1840 to 1861 (LKVLRSLRTLRALRPLRAISRW). At 1862 to 1880 (QGMRIVVNALMYAIPSIFN) the chain is on the cytoplasmic side. A helical membrane pass occupies residues 1881–1902 (VLLVCLVFWLIFSIMGVQFFGG). The Extracellular portion of the chain corresponds to 1903 to 1943 (KFFKCVNEMGELLPITEVNDKWDCIEQNYTWINSKITFDHV). A glycan (N-linked (GlcNAc...) asparagine) is linked at Asn1930. Residues 1944-1965 (GMGYLALLQVATFEGWMEVMAD) constitute an intramembrane region (pore-forming). The Extracellular segment spans residues 1966–1981 (AVDARGVDLQPQREAN). A helical transmembrane segment spans residues 1982 to 2002 (LYAYIYFVIFIVCGSFFTLNL). At 2003–2069 (FIGVIIDNFN…MFYDLSNSRR (67 aa)) the chain is on the cytoplasmic side. The IV repeat unit spans residues 2050–2311 (IKRPINHFLA…NMYIAIILEN (262 aa)). Residues 2070–2090 (FEIAIFVLIFLNMLTMGIEHY) form a helical membrane-spanning segment. The Extracellular segment spans residues 2091–2095 (DQPHA). The helical transmembrane segment at 2096–2116 (VFFILEVSNAFFTTVFGLEAI) threads the bilayer. Over 2117–2132 (VKIVGLRYHYFTVPWN) the chain is Cytoplasmic. Residues 2133–2153 (VFDFLLVLASIFGILMEDIMI) form a helical membrane-spanning segment. Topologically, residues 2154–2162 (DLPISPTLL) are extracellular. Residues 2163–2184 (RVVRVFRIGRILRLIKAAKGIR) traverse the membrane as a helical; Voltage-sensor segment. The Cytoplasmic segment spans residues 2185–2199 (KLLFALVVSLPALFN). The helical transmembrane segment at 2200–2220 (IGALLGLITFIYAILGMSLFG) threads the bilayer. At 2221–2236 (NVKLQGALDDMVNFQT) the chain is on the extracellular side. Residues 2237 to 2259 (FGRSMQLLFRLMTSAGWNDVLES) constitute an intramembrane region (pore-forming). At 2260–2288 (LMIQPPDCDPFIHGHTNGNCGHPLLAITY) the chain is on the extracellular side. The chain crosses the membrane as a helical span at residues 2289–2309 (FTSFIIISYMIVINMYIAIIL). The Cytoplasmic segment spans residues 2310–2844 (ENFNQAHQEE…QFESLPDRQR (535 aa)). Positions 2441–2470 (QEKAAKTIQTGWKEYLRRKREKERSNSGDS) constitute an IQ domain. 4 disordered regions span residues 2457–2479 (RRKR…SPGG), 2584–2668 (SLTS…LSAQ), 2780–2802 (DSPK…GAPI), and 2818–2844 (NPEK…DRQR). Over residues 2467 to 2479 (SGDSATQTSSPGG) the composition is skewed to polar residues. A compositionally biased stretch (low complexity) spans 2595–2632 (AMNNTTNTTSNSASTSGTASSTATAPATGCGPAATSAS). The span at 2647–2658 (SRKRASSFIRKK) shows a compositional bias: basic residues. Residues 2825–2836 (DQGNGQDETAQF) are compositionally biased toward polar residues.

Belongs to the sodium channel (TC 1.A.1.10) family. NaCP60E subfamily. As to expression, in embryonic and larval stages, expression is limited to very few non-neuronal cells in either the CNS or PNS. In pupal and adult stages, expressed in cell bodies of the fly central nervous system, including optic lobes, central brain, subesophageal ganglion, thoracico-abdominal ganglion, major olfactory organs, the third antennal segment and the maxillary palps.

The protein resides in the cell membrane. Its function is as follows. Mediates the voltage-dependent sodium ion permeability of excitable membranes. Plays a role in processing of olfactory information during the olfactory avoidance response. In Drosophila melanogaster (Fruit fly), this protein is Sodium channel protein 60E (NaCP60E).